The following is a 225-amino-acid chain: UPF0758 protein Sama_0327 (225 aa).

The region spanning 102-224 (VLTSPDLTRD…IVSFAERGWI (123 aa)) is the MPN domain. Residues histidine 173, histidine 175, and aspartate 186 each contribute to the Zn(2+) site. A JAMM motif motif is present at residues 173–186 (HNHPSGVAEPSQAD).

It belongs to the UPF0758 family.

The chain is UPF0758 protein Sama_0327 from Shewanella amazonensis (strain ATCC BAA-1098 / SB2B).